A 299-amino-acid chain; its full sequence is tRNA(Met) cytidine acetate ligase (299 aa).

ATP is bound by residues 6-19 (IAEY…HIYM), Gly-100, Asn-157, and Arg-182.

It belongs to the TmcAL family.

Its subcellular location is the cytoplasm. It carries out the reaction cytidine(34) in elongator tRNA(Met) + acetate + ATP = N(4)-acetylcytidine(34) in elongator tRNA(Met) + AMP + diphosphate. Functionally, catalyzes the formation of N(4)-acetylcytidine (ac(4)C) at the wobble position of elongator tRNA(Met), using acetate and ATP as substrates. First activates an acetate ion to form acetyladenylate (Ac-AMP) and then transfers the acetyl group to tRNA to form ac(4)C34. This Mycoplasma mobile (strain ATCC 43663 / 163K / NCTC 11711) (Mesomycoplasma mobile) protein is tRNA(Met) cytidine acetate ligase.